The following is a 294-amino-acid chain: Bifunctional protein FolD (294 aa).

NADP(+)-binding positions include 175 to 177 (GAS) and Ile241.

It belongs to the tetrahydrofolate dehydrogenase/cyclohydrolase family. In terms of assembly, homodimer.

It carries out the reaction (6R)-5,10-methylene-5,6,7,8-tetrahydrofolate + NADP(+) = (6R)-5,10-methenyltetrahydrofolate + NADPH. It catalyses the reaction (6R)-5,10-methenyltetrahydrofolate + H2O = (6R)-10-formyltetrahydrofolate + H(+). The protein operates within one-carbon metabolism; tetrahydrofolate interconversion. In terms of biological role, catalyzes the oxidation of 5,10-methylenetetrahydrofolate to 5,10-methenyltetrahydrofolate and then the hydrolysis of 5,10-methenyltetrahydrofolate to 10-formyltetrahydrofolate. The sequence is that of Bifunctional protein FolD from Hahella chejuensis (strain KCTC 2396).